Consider the following 325-residue polypeptide: Anthranilate phosphoribosyltransferase (325 aa).

5-phospho-alpha-D-ribose 1-diphosphate contacts are provided by residues Gly74, 77–78 (GD), Thr82, 84–87 (NVST), 101–109 (KHGNVSITS), and Ser113. Gly74 contributes to the anthranilate binding site. Ser86 lines the Mg(2+) pocket. Asn104 is a binding site for anthranilate. Anthranilate is bound at residue Arg159. 2 residues coordinate Mg(2+): Asp217 and Glu218.

It belongs to the anthranilate phosphoribosyltransferase family. Homodimer. Mg(2+) serves as cofactor.

It catalyses the reaction N-(5-phospho-beta-D-ribosyl)anthranilate + diphosphate = 5-phospho-alpha-D-ribose 1-diphosphate + anthranilate. The protein operates within amino-acid biosynthesis; L-tryptophan biosynthesis; L-tryptophan from chorismate: step 2/5. Its function is as follows. Catalyzes the transfer of the phosphoribosyl group of 5-phosphorylribose-1-pyrophosphate (PRPP) to anthranilate to yield N-(5'-phosphoribosyl)-anthranilate (PRA). This Thermococcus kodakarensis (strain ATCC BAA-918 / JCM 12380 / KOD1) (Pyrococcus kodakaraensis (strain KOD1)) protein is Anthranilate phosphoribosyltransferase.